The following is a 65-amino-acid chain: Small, acid-soluble spore protein C3 (65 aa).

This sequence belongs to the alpha/beta-type SASP family.

In terms of biological role, SASP are bound to spore DNA. They are double-stranded DNA-binding proteins that cause DNA to change to an a-like conformation. They protect the DNA backbone from chemical and enzymatic cleavage and are thus involved in dormant spore's high resistance to UV light. The polypeptide is Small, acid-soluble spore protein C3 (SASP-C3) (Priestia megaterium (Bacillus megaterium)).